The following is a 785-amino-acid chain: Terminal nucleotidyltransferase 4A (785 aa).

The disordered stretch occupies residues 56 to 184; that stretch reads AAGRAAPAAG…QFHPGRRKRE (129 aa). Positions 68-85 are enriched in pro residues; sequence GPAPAASSPPPAPGPAAL. Composition is skewed to low complexity over residues 86 to 98 and 106 to 145; these read PPALLTALGPAAD and SPSLSSSSSSSSSNAESGTESPGCSSSSSSSTSLGRAGSG. D290 and D292 together coordinate Mg(2+). Residues G353, K378, S396, and Y397 each contribute to the ATP site. The 60-residue stretch at 421 to 480 folds into the PAP-associated domain; it reads NLGMLLVEFFELYGRNFNYLKTGIRIKEGGAYIAKEEIMKAMTSGYRPSMLCIEDPLLPG. ATP contacts are provided by N481 and R485. Residues 593–611 are compositionally biased toward low complexity; it reads PQLLSSGSSASSVSSLSGS. 2 disordered regions span residues 593–625 and 731–785; these read PQLLSSGSSASSVSSLSGSDIDSDTPPCTTPSV and KGSH…SLSR. Basic residues predominate over residues 757–774; it reads RGHHQYNRTGWRRKKHAH.

This sequence belongs to the DNA polymerase type-B-like family. Component of a nuclear TRAMP-like complex, an ATP-dependent exosome regulatory complex consisting of a helicase (MTREX), an oligadenylate polymerase (TENT4B or TENT4A), and a substrate specific RNA-binding factor (ZCCHC7 or ZCCHC8). Several TRAMP-like complexes exist with specific compositions and are associated with nuclear, or nucleolar RNA exosomes. Requires Mg(2+) as cofactor. It depends on Mn(2+) as a cofactor.

The protein localises to the cytoplasm. The protein resides in the nucleus. It localises to the nucleoplasm. It carries out the reaction RNA(n) + ATP = RNA(n)-3'-adenine ribonucleotide + diphosphate. In terms of biological role, terminal nucleotidyltransferase that catalyzes preferentially the transfer of ATP and GTP on RNA 3' poly(A) tail creating a heterogeneous 3' poly(A) tail leading to mRNAs stabilization by protecting mRNAs from active deadenylation. Also functions as a catalytic subunit of a TRAMP-like complex which has a poly(A) RNA polymerase activity and is involved in a post-transcriptional quality control mechanism. Polyadenylation with short oligo(A) tails is required for the degradative activity of the exosome on several of its nuclear RNA substrates. Has no terminal uridylyltransferase activity, and does not play a role in replication-dependent histone mRNA degradation via uridylation. The polypeptide is Terminal nucleotidyltransferase 4A (Mus musculus (Mouse)).